A 205-amino-acid chain; its full sequence is Holliday junction branch migration complex subunit RuvA (205 aa).

The tract at residues 1-64 (MIGRLRGVLV…EDAQLLYGFI (64 aa)) is domain I. Residues 65-143 (TKQERALFRL…SLMEASAGSE (79 aa)) are domain II. The segment at 144–156 (REFVLQSNYSPAP) is flexible linker. The tract at residues 157 to 205 (TVNSAEEDAISALISLGYKPPQASKSVSAAYKEGMDSETLIKAALKSML) is domain III.

Belongs to the RuvA family. Homotetramer. Forms an RuvA(8)-RuvB(12)-Holliday junction (HJ) complex. HJ DNA is sandwiched between 2 RuvA tetramers; dsDNA enters through RuvA and exits via RuvB. An RuvB hexamer assembles on each DNA strand where it exits the tetramer. Each RuvB hexamer is contacted by two RuvA subunits (via domain III) on 2 adjacent RuvB subunits; this complex drives branch migration. In the full resolvosome a probable DNA-RuvA(4)-RuvB(12)-RuvC(2) complex forms which resolves the HJ.

The protein resides in the cytoplasm. Functionally, the RuvA-RuvB-RuvC complex processes Holliday junction (HJ) DNA during genetic recombination and DNA repair, while the RuvA-RuvB complex plays an important role in the rescue of blocked DNA replication forks via replication fork reversal (RFR). RuvA specifically binds to HJ cruciform DNA, conferring on it an open structure. The RuvB hexamer acts as an ATP-dependent pump, pulling dsDNA into and through the RuvAB complex. HJ branch migration allows RuvC to scan DNA until it finds its consensus sequence, where it cleaves and resolves the cruciform DNA. This is Holliday junction branch migration complex subunit RuvA from Shewanella baltica (strain OS223).